A 227-amino-acid polypeptide reads, in one-letter code: UPF0758 protein lpp2553 (227 aa).

One can recognise an MPN domain in the interval 102–225; sequence RLSNTQQTYA…YSIFAENKWV (124 aa). Zn(2+) is bound by residues H173, H175, and D186. A JAMM motif motif is present at residues 173–186; that stretch reads HNHPSGLSDASQQD.

This sequence belongs to the UPF0758 family.

This is UPF0758 protein lpp2553 from Legionella pneumophila (strain Paris).